The following is a 516-amino-acid chain: Protein psiC (516 aa).

Residues 1–19 (MKILILSFFLILGINLVFC) form the signal peptide. In terms of domain architecture, PA14 spans 109–249 (ESKDEPGIYV…YDACGVCLGK (141 aa)). Asn134, Asn234, Asn250, Asn284, Asn333, Asn357, and Asn367 each carry an N-linked (GlcNAc...) asparagine glycan. A compositionally biased stretch (low complexity) spans 418-427 (DIIIDSSSDI). A disordered region spans residues 418–465 (DIIIDSSSDIPIPTLSPSPQPSRFPTDTPTNTPMPPTRPPTPTEDPKI). Positions 449–460 (TPMPPTRPPTPT) are enriched in pro residues.

It belongs to the prespore-cell-inducing factor family.

The protein resides in the secreted. This chain is Protein psiC (psiC), found in Dictyostelium discoideum (Social amoeba).